The sequence spans 294 residues: ATP synthase gamma chain (294 aa).

The protein belongs to the ATPase gamma chain family. In terms of assembly, F-type ATPases have 2 components, CF(1) - the catalytic core - and CF(0) - the membrane proton channel. CF(1) has five subunits: alpha(3), beta(3), gamma(1), delta(1), epsilon(1). CF(0) has three main subunits: a, b and c.

It is found in the cell inner membrane. Produces ATP from ADP in the presence of a proton gradient across the membrane. The gamma chain is believed to be important in regulating ATPase activity and the flow of protons through the CF(0) complex. In Paramagnetospirillum magneticum (strain ATCC 700264 / AMB-1) (Magnetospirillum magneticum), this protein is ATP synthase gamma chain.